Here is a 249-residue protein sequence, read N- to C-terminus: Spindlin-4 (249 aa).

Tudor-like domain regions lie at residues 41-90 (VGCR…LELH), 119-168 (VGKA…YTLL), and 201-246 (VGKQ…YGLV). 3 histone H3K4me3 and H3R8me2a binding regions span residues 80-85 (GKDSVY), glutamate 128, and 237-239 (DIH).

This sequence belongs to the SPIN/STSY family. Interacts with C11orf84/SPINDOC. Associates with chromatin.

The protein localises to the cytoplasm. It localises to the nucleus. In terms of biological role, binds to acetylated and methylated histones, including H3K4me3 and H4K20me3, probably acting as a histone reader that recognizes chromatin marks to mediate downstream cellular effects. Promotes canonical WNT signaling, and is involved in the down-regulation of cell proliferation. The sequence is that of Spindlin-4 (Spin4) from Mus musculus (Mouse).